The sequence spans 312 residues: Transcriptional regulator protein Pur-beta (312 aa).

The tract at residues 1-32 is disordered; that stretch reads MADGDSGSERGGGGGPCGFQPASRGGGEQETQ. An N-acetylalanine modification is found at Ala-2. Phosphoserine occurs at positions 6 and 8. Arg-24 carries the omega-N-methylarginine modification. Residues 28 to 254 form a DNA-binding region; it reads EQETQELASK…LRVSEVKPSY (227 aa). A Phosphothreonine modification is found at Thr-31. Ser-101 carries the post-translational modification Phosphoserine. Residue Arg-152 is modified to Omega-N-methylarginine. Lys-267 carries the post-translational modification N6-acetyllysine. A compositionally biased stretch (basic and acidic residues) spans 284-295; that stretch reads ERQRDKLYERRG. The tract at residues 284–312 is disordered; the sequence is ERQRDKLYERRGGGSGGGEESEGEEVDED. Arg-294 is modified (omega-N-methylarginine). Residues Ser-298 and Ser-304 each carry the phosphoserine modification. Residues 302 to 312 show a composition bias toward acidic residues; it reads EESEGEEVDED.

Belongs to the PUR DNA-binding protein family. As to quaternary structure, homodimer, heterodimer with PURA and heterotrimer with PURA and YBX1/Y-box protein 1. Interacts with MYOCD and SRF. Expressed in myocardium of heart failure patients.

It localises to the nucleus. In terms of biological role, transcriptional regulator which can act as an activator or a repressor. Represses the transcription of ACTA2 in fibroblasts and smooth muscle cells via its ability to interact with the purine-rich strand of a MCAT- containing element in the 5' flanking region of the gene. Represses the transcription of MYOCD, capable of repressing all isoforms of MYOCD but the magnitude of the repressive effects is most notable for the SMC- specific isoforms. Promotes hepatic glucose production by activating the transcription of ADCY6, leading to cAMP accumulation, increased PKA activity, CREB activation, and increased transcription of PCK1 and G6PC genes. Has capacity to bind repeated elements in single-stranded DNA such as the purine-rich single strand of the PUR element located upstream of the MYC gene. Participates in transcriptional and translational regulation of alpha-MHC expression in cardiac myocytes by binding to the purine-rich negative regulatory (PNR) element Modulates constitutive liver galectin-3 gene transcription by binding to its promoter. May play a role in the dendritic transport of a subset of mRNAs. The sequence is that of Transcriptional regulator protein Pur-beta (PURB) from Homo sapiens (Human).